The following is a 343-amino-acid chain: Calcium/calmodulin-dependent protein kinase type 1B (343 aa).

Residues 15 to 270 (YEIREKLGSG…CQQALQHLWI (256 aa)) enclose the Protein kinase domain. ATP is bound by residues 21–29 (LGSGAFSEV) and Lys44. Asp136 functions as the Proton acceptor in the catalytic mechanism. Residues 290–311 (KNFARTHWKRAFNATSFLRHIR) are calmodulin-binding. The tract at residues 314–343 (GQSPEGEEASRQGMTRHSHPGLGTSQSPKW) is disordered. Ser338 carries the post-translational modification Phosphoserine.

Belongs to the protein kinase superfamily. CAMK Ser/Thr protein kinase family. CaMK subfamily. Isoform 1 and isoform 2 are phosphorylated by CAMKK1. As to expression, isoform 1 is expressed in liver, heart, lung, kidney, spleen and testis. Isoform 2 is predominantly expressed in cerebrum and cerebellum.

Its subcellular location is the cytoplasm. It is found in the nucleus. The enzyme catalyses L-seryl-[protein] + ATP = O-phospho-L-seryl-[protein] + ADP + H(+). The catalysed reaction is L-threonyl-[protein] + ATP = O-phospho-L-threonyl-[protein] + ADP + H(+). Its activity is regulated as follows. Activated by Ca(2+)/calmodulin. Must be phosphorylated to be maximally active. Activated by CAMKK1. In terms of biological role, calcium/calmodulin-dependent protein kinase belonging to a proposed calcium-triggered signaling cascade. In vitro, isoform 1 and isoform 2 phosphorylate CREB1, SYN1/synapsin I. Phosphorylates and activates CAMK1. This Rattus norvegicus (Rat) protein is Calcium/calmodulin-dependent protein kinase type 1B (Pnck).